A 128-amino-acid polypeptide reads, in one-letter code: Fluoride-specific ion channel FluC (128 aa).

4 helical membrane passes run 5-25, 35-55, 67-87, and 96-116; these read IVAIFVGAGLGALLRWFLSLA, LGTLASNLIGGYVIGVAAVVF, LFVITGFLGGLTTFSTYSVEV, and FGWALAVAALHLTGSFALTAL. The Na(+) site is built by Gly-75 and Thr-78.

Belongs to the fluoride channel Fluc/FEX (TC 1.A.43) family.

It is found in the cell inner membrane. The enzyme catalyses fluoride(in) = fluoride(out). Its activity is regulated as follows. Na(+) is not transported, but it plays an essential structural role and its presence is essential for fluoride channel function. Functionally, fluoride-specific ion channel. Important for reducing fluoride concentration in the cell, thus reducing its toxicity. This is Fluoride-specific ion channel FluC from Burkholderia orbicola (strain MC0-3).